The primary structure comprises 415 residues: Gamma-glutamyl phosphate reductase (415 aa).

The protein belongs to the gamma-glutamyl phosphate reductase family.

The protein localises to the cytoplasm. The catalysed reaction is L-glutamate 5-semialdehyde + phosphate + NADP(+) = L-glutamyl 5-phosphate + NADPH + H(+). It participates in amino-acid biosynthesis; L-proline biosynthesis; L-glutamate 5-semialdehyde from L-glutamate: step 2/2. Its function is as follows. Catalyzes the NADPH-dependent reduction of L-glutamate 5-phosphate into L-glutamate 5-semialdehyde and phosphate. The product spontaneously undergoes cyclization to form 1-pyrroline-5-carboxylate. The chain is Gamma-glutamyl phosphate reductase from Ligilactobacillus salivarius (strain UCC118) (Lactobacillus salivarius).